The following is a 608-amino-acid chain: NADH-quinone oxidoreductase subunit C/D (608 aa).

The segment at 1 to 199 is NADH dehydrogenase I subunit C; sequence MSAASSLAPQ…EPFHLSTEKE (199 aa). The segment at 223 to 608 is NADH dehydrogenase I subunit D; that stretch reads DFMFLNLGPN…IDFVMADVDR (386 aa).

This sequence in the N-terminal section; belongs to the complex I 30 kDa subunit family. In the C-terminal section; belongs to the complex I 49 kDa subunit family. As to quaternary structure, NDH-1 is composed of 13 different subunits. Subunits NuoB, CD, E, F, and G constitute the peripheral sector of the complex.

The protein resides in the cell inner membrane. The enzyme catalyses a quinone + NADH + 5 H(+)(in) = a quinol + NAD(+) + 4 H(+)(out). NDH-1 shuttles electrons from NADH, via FMN and iron-sulfur (Fe-S) centers, to quinones in the respiratory chain. The immediate electron acceptor for the enzyme in this species is believed to be ubiquinone. Couples the redox reaction to proton translocation (for every two electrons transferred, four hydrogen ions are translocated across the cytoplasmic membrane), and thus conserves the redox energy in a proton gradient. The chain is NADH-quinone oxidoreductase subunit C/D from Nitrosospira multiformis (strain ATCC 25196 / NCIMB 11849 / C 71).